Reading from the N-terminus, the 124-residue chain is Small ribosomal subunit protein uS12 (124 aa).

D89 is modified (3-methylthioaspartic acid). The tract at residues 104–124 (TAGVENRKQSRSKYGAKRPKK) is disordered. Over residues 112–124 (QSRSKYGAKRPKK) the composition is skewed to basic residues.

This sequence belongs to the universal ribosomal protein uS12 family. In terms of assembly, part of the 30S ribosomal subunit. Contacts proteins S8 and S17. May interact with IF1 in the 30S initiation complex.

In terms of biological role, with S4 and S5 plays an important role in translational accuracy. Its function is as follows. Interacts with and stabilizes bases of the 16S rRNA that are involved in tRNA selection in the A site and with the mRNA backbone. Located at the interface of the 30S and 50S subunits, it traverses the body of the 30S subunit contacting proteins on the other side and probably holding the rRNA structure together. The combined cluster of proteins S8, S12 and S17 appears to hold together the shoulder and platform of the 30S subunit. The chain is Small ribosomal subunit protein uS12 from Pseudothermotoga lettingae (strain ATCC BAA-301 / DSM 14385 / NBRC 107922 / TMO) (Thermotoga lettingae).